Here is a 376-residue protein sequence, read N- to C-terminus: Erythronate-4-phosphate dehydrogenase (376 aa).

Substrate is bound by residues Ser-45 and Thr-66. Residues 126–127 (QV), Asp-146, Thr-174, 201–203 (ASR), and Asp-227 each bind NAD(+). Arg-203 is a catalytic residue. Glu-232 is a catalytic residue. His-249 functions as the Proton donor in the catalytic mechanism. Gly-252 contacts NAD(+). Tyr-253 is a binding site for substrate.

This sequence belongs to the D-isomer specific 2-hydroxyacid dehydrogenase family. PdxB subfamily. In terms of assembly, homodimer.

It is found in the cytoplasm. The catalysed reaction is 4-phospho-D-erythronate + NAD(+) = (R)-3-hydroxy-2-oxo-4-phosphooxybutanoate + NADH + H(+). Its pathway is cofactor biosynthesis; pyridoxine 5'-phosphate biosynthesis; pyridoxine 5'-phosphate from D-erythrose 4-phosphate: step 2/5. Catalyzes the oxidation of erythronate-4-phosphate to 3-hydroxy-2-oxo-4-phosphonooxybutanoate. In Ectopseudomonas mendocina (strain ymp) (Pseudomonas mendocina), this protein is Erythronate-4-phosphate dehydrogenase.